Reading from the N-terminus, the 128-residue chain is Transcription antitermination protein NusB (128 aa).

The protein belongs to the NusB family.

Involved in transcription antitermination. Required for transcription of ribosomal RNA (rRNA) genes. Binds specifically to the boxA antiterminator sequence of the ribosomal RNA (rrn) operons. The chain is Transcription antitermination protein NusB from Exiguobacterium sp. (strain ATCC BAA-1283 / AT1b).